A 156-amino-acid polypeptide reads, in one-letter code: Ribosomal RNA large subunit methyltransferase H (156 aa).

Residues Leu-73, Gly-104, and 123 to 128 (LSALTL) each bind S-adenosyl-L-methionine.

This sequence belongs to the RNA methyltransferase RlmH family. In terms of assembly, homodimer.

The protein resides in the cytoplasm. The enzyme catalyses pseudouridine(1915) in 23S rRNA + S-adenosyl-L-methionine = N(3)-methylpseudouridine(1915) in 23S rRNA + S-adenosyl-L-homocysteine + H(+). Its function is as follows. Specifically methylates the pseudouridine at position 1915 (m3Psi1915) in 23S rRNA. The protein is Ribosomal RNA large subunit methyltransferase H of Shewanella piezotolerans (strain WP3 / JCM 13877).